We begin with the raw amino-acid sequence, 433 residues long: Serine hydroxymethyltransferase (433 aa).

121–123 (AHV) provides a ligand contact to (6S)-5,6,7,8-tetrahydrofolate. The residue at position 227 (Lys-227) is an N6-(pyridoxal phosphate)lysine. Glu-243 lines the (6S)-5,6,7,8-tetrahydrofolate pocket.

This sequence belongs to the SHMT family. Homodimer. Requires pyridoxal 5'-phosphate as cofactor.

The protein resides in the cytoplasm. Its pathway is amino-acid biosynthesis; glycine biosynthesis; glycine from L-serine: step 1/1. Its function is as follows. Catalyzes the reversible interconversion of serine and glycine with a modified folate serving as the one-carbon carrier. Also exhibits a pteridine-independent aldolase activity toward beta-hydroxyamino acids, producing glycine and aldehydes, via a retro-aldol mechanism. This chain is Serine hydroxymethyltransferase, found in Saccharolobus islandicus (strain Y.N.15.51 / Yellowstone #2) (Sulfolobus islandicus).